Here is a 161-residue protein sequence, read N- to C-terminus: Cyclic pyranopterin monophosphate synthase (161 aa).

Substrate-binding positions include 75–77 and 113–114; these read LCH and ME. Residue aspartate 128 is part of the active site.

The protein belongs to the MoaC family. As to quaternary structure, homohexamer; trimer of dimers.

The catalysed reaction is (8S)-3',8-cyclo-7,8-dihydroguanosine 5'-triphosphate = cyclic pyranopterin phosphate + diphosphate. The protein operates within cofactor biosynthesis; molybdopterin biosynthesis. Its function is as follows. Catalyzes the conversion of (8S)-3',8-cyclo-7,8-dihydroguanosine 5'-triphosphate to cyclic pyranopterin monophosphate (cPMP). The chain is Cyclic pyranopterin monophosphate synthase from Methylobacillus flagellatus (strain ATCC 51484 / DSM 6875 / VKM B-1610 / KT).